A 640-amino-acid polypeptide reads, in one-letter code: MSKSVNASLSSAINSVTLVKQENLKENLQNGSAVSVGSSESSNHSMKEISLDYSSPSLQQTEEQDRELNFIDSSMLRPTPPQESDNRLAVEKPNIQPLQGHSPVPSFMSTASTNISSSKINNNQTEFEQLRDSYKSHGDLNSAINDSRIQSIIFELNQQCEKESIPVSNIDWLQWASVPLFAYDLPPDPSNPNATSSSPPPLTPILELIKQNNFCIPSPCRKLVWQSLVSAERNELLTLYATLSTTNNSLDSSIRKIIRMQSFRGPLEPFKYSSTTRHKVSTESIFHVLHAFTLFDTTVEYNIEPLLWLTCAFLSYMAQGNAFRSLVCFIQRGGIREFFISQSSSLDESLFALVWGCLGDLAPSVAISLQRIKVSSLCILYPSLACCFADSLQLPEALRLMDLIAIYGLEMFVRLLVAIFLKDRDKIVNMVSHEQWVKYLRSDVLASYRQPLVQKYTFYTRTPVDLNAWVEDSLALNIDTTQFPSYLSYHETSVSHNTYRQNNLEELKNQNDYLTSQITNLEEGMVMLNKENTKLSEALSNHRVTRSEMEEATEILKNNSADLKAQLEKQPQELENRLLQEISILKQRNQKFLKNNATSIQQIQYLDEELGKTLKQLNDLKEKHAQLQTKWKSVSEMFRN.

The disordered stretch occupies residues 96–120 (QPLQGHSPVPSFMSTASTNISSSKI). Residues 109–120 (STASTNISSSKI) are compositionally biased toward low complexity. Residues 215-408 (CIPSPCRKLV…RLMDLIAIYG (194 aa)) enclose the Rab-GAP TBC domain. The stretch at 500-636 (RQNNLEELKN…LQTKWKSVSE (137 aa)) forms a coiled coil.

This sequence belongs to the GYP5 family.

The protein localises to the nucleus. It localises to the cytoplasm. This chain is Putative GTPase-activating protein C1620.12c, found in Schizosaccharomyces pombe (strain 972 / ATCC 24843) (Fission yeast).